Consider the following 796-residue polypeptide: MPDRKIGDYVVGAEIGRGSFANVYKGYNSKTQVSVAIKSVIKSRLRNKKLIENLEVEISILKNLKHPHVVALLDCEQSKHYFHLLMEYCSLGDLSYFITKREELISNHPLITGVFKKYPSPENSKGLNEVITINFVQQLASALKFLRSQNLVHRDIKPQNLLLSPPVSREVFEDRKYTGLWELPVLKIADFGFARFLPATSMAETLCGSPLYMAPEILRYEKYNAKADLWSVGAVVYEMSVGTPPFPAHNHVELLRNIERQKDKISFPKVAQVPPEIIQLICGLLKQQATERMSFQEFFNDPVITTKLQPCSDEPLLPQNQHIDENLFISEYLPRNSITDKNINNNITNIAKNGVEEALLEEEDEEEDQDQLPSKNDNIQHMEPDSSMLLNKTTQKQTEVQSQPRRELVSEKDYVVVEKRAVEVNALADELEHAGSGALAMQLTNNVGTPYTRRYSSSSRSSSTGSNQRRPSFGDRKVPISISPTNALSKAINIASNRLFKQPSPPKATPVLLEEKDKDKNTERLTSTVFNQNMLNSTTTREITRPLHSLTITSSTSDEEIIQRLSNLTTKAYAIKLLAEIKFSQLAPLPPSNETAVFDNYGDDEGTQSGYNNEPLSPILIKTIGEEGIALYVKTLFLLSKAMNIAMEWWRLNSLSRPASPKLNDLVQWIRGKFNESLEKAEFIKLKLQNAKEQLEESESDTDKTVVAEKLIFDRAIEISRIAVVNELKNDDLVGTELSYATAIWMLEALLEPDDTEESKLDDEDRKMIEKFISSIGNRLSVLRKKIESTSQETRK.

The Protein kinase domain maps to 9–304 (YVVGAEIGRG…FQEFFNDPVI (296 aa)). ATP contacts are provided by residues 15–23 (IGRGSFANV) and Lys-38. Asp-155 functions as the Proton acceptor in the catalytic mechanism. Residues 360-370 (LEEEDEEEDQD) are compositionally biased toward acidic residues. Disordered regions lie at residues 360 to 382 (LEEE…IQHM), 389 to 408 (LLNK…RREL), and 450 to 480 (PYTR…KVPI). Residues 389–403 (LLNKTTQKQTEVQSQ) are compositionally biased toward polar residues. Positions 453-470 (RRYSSSSRSSSTGSNQRR) are enriched in low complexity.

This sequence belongs to the protein kinase superfamily. Ser/Thr protein kinase family. APG1/unc-51/ULK1 subfamily. In terms of assembly, homodimer. Forms a ternary complex with ATG13 and ATG17.

The protein localises to the cytoplasm. It localises to the preautophagosomal structure membrane. The catalysed reaction is L-seryl-[protein] + ATP = O-phospho-L-seryl-[protein] + ADP + H(+). It carries out the reaction L-threonyl-[protein] + ATP = O-phospho-L-threonyl-[protein] + ADP + H(+). In terms of biological role, serine/threonine protein kinase involved in the cytoplasm to vacuole transport (Cvt) and found to be essential in autophagy, where it is required for the formation of autophagosomes. Involved in the clearance of protein aggregates which cannot be efficiently cleared by the proteasome. Required for selective autophagic degradation of the nucleus (nucleophagy) as well as for mitophagy which contributes to regulate mitochondrial quantity and quality by eliminating the mitochondria to a basal level to fulfill cellular energy requirements and preventing excess ROS production. Also involved in endoplasmic reticulum-specific autophagic process, in selective removal of ER-associated degradation (ERAD) substrates. Plays a key role in ATG9 and ATG23 cycling through the pre-autophagosomal structure and is necessary to promote ATG18 binding to ATG9 through phosphorylation of ATG9. Catalyzes phosphorylation of ATG4, decreasing the interaction between ATG4 and ATG8 and impairing deconjugation of PE-conjugated forms of ATG8. The polypeptide is Serine/threonine-protein kinase ATG1 (Komagataella pastoris (Yeast)).